A 223-amino-acid polypeptide reads, in one-letter code: Flagellar L-ring protein (223 aa).

The first 18 residues, 1 to 18 (MKKSLMALIVVGSFLLSA), serve as a signal peptide directing secretion. Cys-19 is lipidated: N-palmitoyl cysteine. The S-diacylglycerol cysteine moiety is linked to residue Cys-19.

This sequence belongs to the FlgH family. The basal body constitutes a major portion of the flagellar organelle and consists of four rings (L,P,S, and M) mounted on a central rod.

The protein resides in the cell outer membrane. It is found in the bacterial flagellum basal body. Assembles around the rod to form the L-ring and probably protects the motor/basal body from shearing forces during rotation. The chain is Flagellar L-ring protein from Herminiimonas arsenicoxydans.